We begin with the raw amino-acid sequence, 114 residues long: uncharacterized protein (114 aa).

The tract at residues 1-37 (MLKKILSLFKKEEPKTEEKPTEVEEKKEEREEKEEKK) is disordered. Over residues 9–37 (FKKEEPKTEEKPTEVEEKKEEREEKEEKK) the composition is skewed to basic and acidic residues.

This is an uncharacterized protein from Aquifex aeolicus (strain VF5).